A 224-amino-acid chain; its full sequence is MAELYVKPGNKERGWNDPPQFSYGLQTQAGGPRRSLLTKRVAAPQDGSPRVPASETSPGPPPMGPPPPSSKAPRSPPVGSGPASGVEPTSFPVESEAVMEDVLRPLEQALEDCRGHTRKQVCDDISRRLALLQEQWAGGKLSIPVKKRMALLVQELSSHRWDAADDIHRSLMVDHVTEVSQWMVGVKRLIAEKRSLFSEEAANEEKSAATAEKNHTIPGFQQAS.

Disordered regions lie at residues 1-90 and 201-224; these read MAEL…EPTS and AANE…QQAS. 3 positions are modified to phosphoserine: S48, S57, and S75. Positions 58–76 are enriched in pro residues; it reads PGPPPMGPPPPSSKAPRSP. The span at 201 to 215 shows a compositional bias: basic and acidic residues; sequence AANEEKSAATAEKNH.

This sequence belongs to the SRA1 family. SRA1 RNA exists in a ribonucleoprotein complex containing NCOA1. The RNA also forms a complex with PUS1 and RARG in the nucleus. Interacts with AR. As to expression, highly expressed in liver and skeletal muscle and to a lesser extent in brain. Also expressed in both normal and tumorigenic breast epithelial cell lines. Significantly up-regulated in human tumors of the breast, ovary, and uterus.

Its subcellular location is the nucleus. The protein localises to the cytoplasm. In terms of biological role, functional RNA which acts as a transcriptional coactivator that selectively enhances steroid receptor-mediated transactivation ligand-independently through a mechanism involving the modulating N-terminal domain (AF-1) of steroid receptors. Also mediates transcriptional coactivation of steroid receptors ligand-dependently through the steroid-binding domain (AF-2). Enhances cellular proliferation and differentiation and promotes apoptosis in vivo. May play a role in tumorigenesis. This chain is Steroid receptor RNA activator 1, found in Homo sapiens (Human).